The chain runs to 39 residues: Photosystem II reaction center protein J (39 aa).

The helical transmembrane segment at 7–27 threads the bilayer; sequence IPLWLIGTIVGILVIGLIGIY.

Belongs to the PsbJ family. PSII is composed of 1 copy each of membrane proteins PsbA, PsbB, PsbC, PsbD, PsbE, PsbF, PsbH, PsbI, PsbJ, PsbK, PsbL, PsbM, PsbT, PsbX, PsbY, PsbZ, Psb30/Ycf12, at least 3 peripheral proteins of the oxygen-evolving complex and a large number of cofactors. It forms dimeric complexes.

The protein localises to the plastid. It is found in the chloroplast thylakoid membrane. One of the components of the core complex of photosystem II (PSII). PSII is a light-driven water:plastoquinone oxidoreductase that uses light energy to abstract electrons from H(2)O, generating O(2) and a proton gradient subsequently used for ATP formation. It consists of a core antenna complex that captures photons, and an electron transfer chain that converts photonic excitation into a charge separation. The polypeptide is Photosystem II reaction center protein J (Welwitschia mirabilis (Tree tumbo)).